The chain runs to 116 residues: Nucleoid-associated protein MLBr02330 (116 aa).

The interval 96–116 (LTSAMRPTAPPPTPPTYMAGT) is disordered.

This sequence belongs to the YbaB/EbfC family. Homodimer.

The protein resides in the cytoplasm. Its subcellular location is the nucleoid. In terms of biological role, binds to DNA and alters its conformation. May be involved in regulation of gene expression, nucleoid organization and DNA protection. The protein is Nucleoid-associated protein MLBr02330 of Mycobacterium leprae (strain Br4923).